Here is a 588-residue protein sequence, read N- to C-terminus: Schlafen family member 12-like (588 aa).

The helical transmembrane segment at 566-586 threads the bilayer; it reads IFLFVCLFRFCLFVCWFVCFF.

It belongs to the Schlafen family.

The protein localises to the membrane. The sequence is that of Schlafen family member 12-like (SLFN12L) from Homo sapiens (Human).